The chain runs to 768 residues: Phosphoribosylformylglycinamidine synthase subunit PurL (768 aa).

The active site involves histidine 53. ATP is bound at residue tyrosine 56. Glutamate 98 contributes to the Mg(2+) binding site. Residues 99-102 and arginine 121 contribute to the substrate site; that span reads SHNH. Histidine 100 functions as the Proton acceptor in the catalytic mechanism. A Mg(2+)-binding site is contributed by aspartate 122. Residue glutamine 253 coordinates substrate. Mg(2+) is bound at residue aspartate 285. 328 to 330 serves as a coordination point for substrate; that stretch reads ETQ. ATP is bound by residues aspartate 516 and glycine 561. Mg(2+) is bound at residue asparagine 562. Serine 564 is a substrate binding site.

It belongs to the FGAMS family. In terms of assembly, monomer. Part of the FGAM synthase complex composed of 1 PurL, 1 PurQ and 2 PurS subunits.

Its subcellular location is the cytoplasm. It catalyses the reaction N(2)-formyl-N(1)-(5-phospho-beta-D-ribosyl)glycinamide + L-glutamine + ATP + H2O = 2-formamido-N(1)-(5-O-phospho-beta-D-ribosyl)acetamidine + L-glutamate + ADP + phosphate + H(+). It participates in purine metabolism; IMP biosynthesis via de novo pathway; 5-amino-1-(5-phospho-D-ribosyl)imidazole from N(2)-formyl-N(1)-(5-phospho-D-ribosyl)glycinamide: step 1/2. Functionally, part of the phosphoribosylformylglycinamidine synthase complex involved in the purines biosynthetic pathway. Catalyzes the ATP-dependent conversion of formylglycinamide ribonucleotide (FGAR) and glutamine to yield formylglycinamidine ribonucleotide (FGAM) and glutamate. The FGAM synthase complex is composed of three subunits. PurQ produces an ammonia molecule by converting glutamine to glutamate. PurL transfers the ammonia molecule to FGAR to form FGAM in an ATP-dependent manner. PurS interacts with PurQ and PurL and is thought to assist in the transfer of the ammonia molecule from PurQ to PurL. This Methanothrix thermoacetophila (strain DSM 6194 / JCM 14653 / NBRC 101360 / PT) (Methanosaeta thermophila) protein is Phosphoribosylformylglycinamidine synthase subunit PurL.